A 515-amino-acid polypeptide reads, in one-letter code: Probable cytosol aminopeptidase (515 aa).

The Mn(2+) site is built by K274 and D279. K286 is an active-site residue. D297, D356, and E358 together coordinate Mn(2+). Residue R360 is part of the active site.

Belongs to the peptidase M17 family. Mn(2+) serves as cofactor.

It is found in the cytoplasm. The catalysed reaction is Release of an N-terminal amino acid, Xaa-|-Yaa-, in which Xaa is preferably Leu, but may be other amino acids including Pro although not Arg or Lys, and Yaa may be Pro. Amino acid amides and methyl esters are also readily hydrolyzed, but rates on arylamides are exceedingly low.. It catalyses the reaction Release of an N-terminal amino acid, preferentially leucine, but not glutamic or aspartic acids.. Its function is as follows. Presumably involved in the processing and regular turnover of intracellular proteins. Catalyzes the removal of unsubstituted N-terminal amino acids from various peptides. The polypeptide is Probable cytosol aminopeptidase (Desulforapulum autotrophicum (strain ATCC 43914 / DSM 3382 / VKM B-1955 / HRM2) (Desulfobacterium autotrophicum)).